We begin with the raw amino-acid sequence, 156 residues long: UPF0756 membrane protein Exig_2210 (156 aa).

Helical transmembrane passes span 5 to 25 (LFLIGLVLIGVIAQNKSLIIA), 52 to 72 (WGVTLITAAILVPIATGDIGF), 83 to 103 (IGIISFLAGIFVAIIAAHGVG), 109 to 129 (PLVTTALLAGTILAVGLFRGV), and 131 to 151 (VGPLIGAGIAALVIGMWDIIV).

The protein belongs to the UPF0756 family.

The protein localises to the cell membrane. The chain is UPF0756 membrane protein Exig_2210 from Exiguobacterium sibiricum (strain DSM 17290 / CCUG 55495 / CIP 109462 / JCM 13490 / 255-15).